The primary structure comprises 711 residues: MHLKPYWKLQKKEHPPEVSRETQRTPMNHQKAVNDETCKASHITSSVFPSASLGKASSRKPFGILSPNVLCSMSGKSPVESSLNVKTKKNAPSATIHQGEEEGPLDIWAVVKPGNTKEKIAFFASHQCSNRIGSMKIKSSWDIDGRATKRRKKSGDLKKAKVQVERMREVNSRCYQPEPFACGIEHCSVHYVSDSGDGVYAGRPLSVIQMVAFLEQRASALLASCSKNCTNSPAIVRFSGQSRGVPAVSESYSAPGACEEPTERGNLEVGEPQSEPVRVLDMVAKLESECLKRQGQREPGSLSRNNSFRRNVGRVLLANSTQADEGKTKKGVLEAPDTQVNPVGSVSVDCGPSRADRCSPKEDQAWDGASQDCPPLPAGVSFHIDSAELEPGSQTAVKNSNRYDVEMTDELVGLPFSSHTYSQASELPTDAVDCMSRELVSLTSRNPDQRKESLCISITVSKVDKDQPSILNSCEDPVPGMLFFLPPGQHLSDYSQLNESTTKESSEASQLEDAAGGDSASEEKSGSAEPFVLPASSVESTLPVLEASSWKKQVSHDFLETRFKIQQLLEPQQYMAFLPHHIMVKIFRLLPTKSLVALKCTCCYFKFIIEYYNIRPADSRWVRDPRYREDPCKQCKKKYVKGDVSLCRWHPKPYCQALPYGPGYWMCCHRSQKGFPGCKLGLHDNHWVPACHSFNRAIHKKAKGTEAEEEY.

4 disordered regions span residues 1–36 (MHLK…VNDE), 249–271 (SESY…EVGE), 337–372 (DTQV…ASQD), and 494–529 (YSQL…GSAE). The segment covering 10-23 (QKKEHPPEVSRETQ) has biased composition (basic and acidic residues). The segment covering 354–364 (RADRCSPKEDQ) has biased composition (basic and acidic residues). The region spanning 572-624 (QQYMAFLPHHIMVKIFRLLPTKSLVALKCTCCYFKFIIEYYNIRPADSRWVRD) is the F-box domain.

As to quaternary structure, directly interacts with SKP1 and CUL1.

Its function is as follows. Substrate-recognition component of the SCF (SKP1-CUL1-F-box protein)-type E3 ubiquitin ligase complex. The chain is F-box only protein 34 (FBXO34) from Homo sapiens (Human).